Consider the following 448-residue polypeptide: Eukaryotic translation initiation factor 3 subunit E (448 aa).

In terms of domain architecture, PCI spans 254–423 (TDLFFSPAYI…GTVIMNHPPQ (170 aa)).

Belongs to the eIF-3 subunit E family. Component of the eukaryotic translation initiation factor 3 (eIF-3) complex.

The protein resides in the cytoplasm. Component of the eukaryotic translation initiation factor 3 (eIF-3) complex, which is involved in protein synthesis of a specialized repertoire of mRNAs and, together with other initiation factors, stimulates binding of mRNA and methionyl-tRNAi to the 40S ribosome. The eIF-3 complex specifically targets and initiates translation of a subset of mRNAs involved in cell proliferation. The sequence is that of Eukaryotic translation initiation factor 3 subunit E (int6) from Emericella nidulans (strain FGSC A4 / ATCC 38163 / CBS 112.46 / NRRL 194 / M139) (Aspergillus nidulans).